The chain runs to 222 residues: Ras-related protein RABA4d (222 aa).

Residue 22 to 29 participates in GTP binding; sequence GDSAVGKT. Residues 44–52 carry the Effector region motif; it reads SKATIGVEF. Residues 70–74, 128–131, and 158–159 each bind GTP; these read DTAGQ, NKCD, and SA. S-geranylgeranyl cysteine attachment occurs at residues C218 and C219.

The protein belongs to the small GTPase superfamily. Rab family. As to quaternary structure, interacts with PI4KB1. In terms of tissue distribution, specifically expressed in pollen and localized to the tips of growing pollen tubes.

Its subcellular location is the cytoplasmic vesicle membrane. In terms of biological role, intracellular vesicle trafficking and protein transport. Plays an important role in the regulation of pollen tube tip growth. The chain is Ras-related protein RABA4d (RABA4D) from Arabidopsis thaliana (Mouse-ear cress).